The primary structure comprises 578 residues: MKASRFFIGTLKEAPADAEIVSHKLMVRAGMIRRVAGGIYNYLPIGLRSIRKVEAIVREEMNRAGAIELLMPAVQPAELWQESGRWEKYGPELLRFKDRKQSDFVIGPTHEEVVTDIARGQIKSYRQLPVNFYQVQTKFRDEIRPRFGVMRGREFIMKDAYSFDKDMDGLRESYRKMYDAYVRIFTRLGLDFRAVAADNGSIGGSGSHEFHVIADTGEDDIAYCPTSDFASNVEAAEALPLIAERAAPKEELRKTSTPGKAKCEAVAEHLNIPLEKTIKSIILATENEGAEPTIWLLMLRGDHDLNEIKVNKLPGLGEFRFATEEEIVEWFGTPPGYLGPLNTKKPIKVIADRTVANMSDFVVGTNEVDFHTTGVNWGRDLPEPVVADIRNVKKDDPSPDGKGVIDICRGIEVGHVFQLGTKYSEAMNATFLDESGKPQPMQMGCYGIGITRILGAAIEQNFDDKGIIWPESIAPFEVVLCPMGYDRSDAVREQADKLHDELTAAGIDVILDDRGERPGVMFADWELIGVPHRLVIGERGLKDGKIEYQGRRDAEATLLPVEAAAQAVIDKIHAALAR.

The protein belongs to the class-II aminoacyl-tRNA synthetase family. ProS type 1 subfamily. As to quaternary structure, homodimer.

It is found in the cytoplasm. It catalyses the reaction tRNA(Pro) + L-proline + ATP = L-prolyl-tRNA(Pro) + AMP + diphosphate. Functionally, catalyzes the attachment of proline to tRNA(Pro) in a two-step reaction: proline is first activated by ATP to form Pro-AMP and then transferred to the acceptor end of tRNA(Pro). As ProRS can inadvertently accommodate and process non-cognate amino acids such as alanine and cysteine, to avoid such errors it has two additional distinct editing activities against alanine. One activity is designated as 'pretransfer' editing and involves the tRNA(Pro)-independent hydrolysis of activated Ala-AMP. The other activity is designated 'posttransfer' editing and involves deacylation of mischarged Ala-tRNA(Pro). The misacylated Cys-tRNA(Pro) is not edited by ProRS. In Paraburkholderia phymatum (strain DSM 17167 / CIP 108236 / LMG 21445 / STM815) (Burkholderia phymatum), this protein is Proline--tRNA ligase.